A 579-amino-acid chain; its full sequence is Basic helix-loop-helix ARNT-like protein 2 (579 aa).

An interaction with PER2 region spans residues 1–198 (MEFPRKRRGR…SPREKPIDTK (198 aa)). A Nuclear localization signal motif is present at residues 4–9 (PRKRRG). The disordered stretch occupies residues 40–61 (RTGVSAPSGIREAHSQMEKRRR). Residues 48–101 (GIREAHSQMEKRRRDKMNHLIQKLSSMIPPHIPTAHKLDKLSVLRRAVQYLRSL) enclose the bHLH domain. Positions 50 to 59 (REAHSQMEKR) are enriched in basic and acidic residues. Positions 118–128 (IQDKELSHLIL) match the Nuclear export signal 1 motif. A PAS 1 domain is found at 119–190 (QDKELSHLIL…KEQLSCDGSP (72 aa)). The segment covering 186–196 (CDGSPREKPID) has biased composition (basic and acidic residues). A disordered region spans residues 186 to 213 (CDGSPREKPIDTKTSQVYSHPYTGRPRM). K226 is covalently cross-linked (Glycyl lysine isopeptide (Lys-Gly) (interchain with G-Cter in SUMO2 and SUMO3)). K233 is covalently cross-linked (Glycyl lysine isopeptide (Lys-Gly) (interchain with G-Cter in SUMO2)). The PAS 2 domain maps to 296-366 (VPQKSGKINV…DKHKAVLQSK (71 aa)). The short motif at 331 to 339 (LGYLPQELL) is the Nuclear export signal 2 element. In terms of domain architecture, PAC spans 371–414 (TDSYKFRVKDGAFVTLKSEWFSFTNPWTKELEYIVSVNTLVLGR). The tract at residues 469–536 (RLHSSSPEDA…AHPHGPLPGD (68 aa)) is disordered.

As to quaternary structure, component of the circadian core oscillator, which includes the CRY proteins, CLOCK, or NPAS2, BMAL1 or BMAL2, CSNK1D and/or CSNK1E, TIMELESS and the PER proteins. Interacts directly with CLOCK to form the BMAL2-CLOCK transactivator. Can form heterodimers or homodimers which interact directly with CLOCK to form the transcription activator. Interacts with NPAS2 and HIF1A. Interacts with PER2. As to expression, expressed in the suprachiasmatic nucleus (SCN).

It is found in the nucleus. Transcriptional activator which forms a core component of the circadian clock. The circadian clock, an internal time-keeping system, regulates various physiological processes through the generation of approximately 24 hour circadian rhythms in gene expression, which are translated into rhythms in metabolism and behavior. It is derived from the Latin roots 'circa' (about) and 'diem' (day) and acts as an important regulator of a wide array of physiological functions including metabolism, sleep, body temperature, blood pressure, endocrine, immune, cardiovascular, and renal function. Consists of two major components: the central clock, residing in the suprachiasmatic nucleus (SCN) of the brain, and the peripheral clocks that are present in nearly every tissue and organ system. Both the central and peripheral clocks can be reset by environmental cues, also known as Zeitgebers (German for 'timegivers'). The predominant Zeitgeber for the central clock is light, which is sensed by retina and signals directly to the SCN. The central clock entrains the peripheral clocks through neuronal and hormonal signals, body temperature and feeding-related cues, aligning all clocks with the external light/dark cycle. Circadian rhythms allow an organism to achieve temporal homeostasis with its environment at the molecular level by regulating gene expression to create a peak of protein expression once every 24 hours to control when a particular physiological process is most active with respect to the solar day. Transcription and translation of core clock components (CLOCK, NPAS2, BMAL1, BMAL2, PER1, PER2, PER3, CRY1 and CRY2) plays a critical role in rhythm generation, whereas delays imposed by post-translational modifications (PTMs) are important for determining the period (tau) of the rhythms (tau refers to the period of a rhythm and is the length, in time, of one complete cycle). A diurnal rhythm is synchronized with the day/night cycle, while the ultradian and infradian rhythms have a period shorter and longer than 24 hours, respectively. Disruptions in the circadian rhythms contribute to the pathology of cardiovascular diseases, cancer, metabolic syndromes and aging. A transcription/translation feedback loop (TTFL) forms the core of the molecular circadian clock mechanism. Transcription factors, CLOCK or NPAS2 and BMAL1 or BMAL2, form the positive limb of the feedback loop, act in the form of a heterodimer and activate the transcription of core clock genes and clock-controlled genes (involved in key metabolic processes), harboring E-box elements (5'-CACGTG-3') within their promoters. The core clock genes: PER1/2/3 and CRY1/2 which are transcriptional repressors form the negative limb of the feedback loop and interact with the CLOCK|NPAS2-BMAL1|BMAL2 heterodimer inhibiting its activity and thereby negatively regulating their own expression. This heterodimer also activates nuclear receptors NR1D1/2 and RORA/B/G, which form a second feedback loop and which activate and repress BMAL1 transcription, respectively. The CLOCK-BMAL2 heterodimer activates the transcription of SERPINE1/PAI1 and BHLHE40/DEC1. This chain is Basic helix-loop-helix ARNT-like protein 2 (Bmal2), found in Mus musculus (Mouse).